A 463-amino-acid chain; its full sequence is Increased DNA methylation 3 (463 aa).

Positions 169–182 (NLDESRETEQDCSR) are enriched in basic and acidic residues. Disordered stretches follow at residues 169–199 (NLDESRETEQDCSRNGDATANGVVTNEDYNS) and 300–347 (RRFK…TTGT). Over residues 184–199 (GDATANGVVTNEDYNS) the composition is skewed to polar residues. Basic residues predominate over residues 300-310 (RRFKNSSKKAT).

Interacts with MBD7 (via C-terminus), IDM1 and IDM2. Part of a complex made of MBD7, IDM1, IDM2 and IDM3.

It is found in the nucleus. Its function is as follows. Acts as an anti-silencing factor that prevents DNA hypermethylation and gene repression. The protein is Increased DNA methylation 3 of Arabidopsis thaliana (Mouse-ear cress).